We begin with the raw amino-acid sequence, 294 residues long: HTH-type transcriptional activator AmpR (294 aa).

Residues 6–63 (IPLNSLRAFEAAARQLSFTKAAIELNVTHAAISQQVKALEQRLNCRLFIRISRGLVLT) enclose the HTH lysR-type domain. Residues 23-42 (FTKAAIELNVTHAAISQQVK) constitute a DNA-binding region (H-T-H motif).

The protein belongs to the LysR transcriptional regulatory family.

It is found in the cytoplasm. This protein is a positive regulator of gene expression of beta-lactamase (AmpC). This Yersinia enterocolitica protein is HTH-type transcriptional activator AmpR (ampR).